A 122-amino-acid polypeptide reads, in one-letter code: Large ribosomal subunit protein uL14 (122 aa).

This sequence belongs to the universal ribosomal protein uL14 family. As to quaternary structure, part of the 50S ribosomal subunit. Forms a cluster with proteins L3 and L19. In the 70S ribosome, L14 and L19 interact and together make contacts with the 16S rRNA in bridges B5 and B8.

In terms of biological role, binds to 23S rRNA. Forms part of two intersubunit bridges in the 70S ribosome. The protein is Large ribosomal subunit protein uL14 of Gluconacetobacter diazotrophicus (strain ATCC 49037 / DSM 5601 / CCUG 37298 / CIP 103539 / LMG 7603 / PAl5).